A 205-amino-acid polypeptide reads, in one-letter code: Large ribosomal subunit protein bL17c (205 aa).

The N-terminal 89 residues, 1–89 (MASASTTWSM…VIDNGGRVFA (89 aa)), are a transit peptide targeting the chloroplast.

The protein belongs to the bacterial ribosomal protein bL17 family. Part of the 50S ribosomal subunit.

The protein localises to the plastid. It localises to the chloroplast. In terms of biological role, this protein binds directly to 23S ribosomal RNA. This chain is Large ribosomal subunit protein bL17c (RPL17), found in Nicotiana tabacum (Common tobacco).